The following is a 335-amino-acid chain: Methylthioribose-1-phosphate isomerase (335 aa).

Substrate contacts are provided by residues 43-45 (RGA), Arg86, and Gln193. Asp234 (proton donor) is an active-site residue. Position 244–245 (244–245 (NK)) interacts with substrate.

Belongs to the eIF-2B alpha/beta/delta subunits family. MtnA subfamily.

The catalysed reaction is 5-(methylsulfanyl)-alpha-D-ribose 1-phosphate = 5-(methylsulfanyl)-D-ribulose 1-phosphate. The protein operates within amino-acid biosynthesis; L-methionine biosynthesis via salvage pathway; L-methionine from S-methyl-5-thio-alpha-D-ribose 1-phosphate: step 1/6. Its function is as follows. Catalyzes the interconversion of methylthioribose-1-phosphate (MTR-1-P) into methylthioribulose-1-phosphate (MTRu-1-P). This chain is Methylthioribose-1-phosphate isomerase, found in Parabacteroides distasonis (strain ATCC 8503 / DSM 20701 / CIP 104284 / JCM 5825 / NCTC 11152).